We begin with the raw amino-acid sequence, 339 residues long: Dihydroorotate dehydrogenase (quinone) (339 aa).

Residues 62–66 (AGMDK) and threonine 86 contribute to the FMN site. Lysine 66 lines the substrate pocket. 111-115 (NRMGF) is a binding site for substrate. FMN is bound by residues asparagine 139 and asparagine 172. Asparagine 172 is a substrate binding site. Serine 175 serves as the catalytic Nucleophile. A substrate-binding site is contributed by asparagine 177. Lysine 217 and threonine 245 together coordinate FMN. Residue 246–247 (NT) participates in substrate binding. FMN contacts are provided by residues glycine 268, glycine 297, and 318–319 (YS).

It belongs to the dihydroorotate dehydrogenase family. Type 2 subfamily. As to quaternary structure, monomer. FMN serves as cofactor.

Its subcellular location is the cell membrane. It carries out the reaction (S)-dihydroorotate + a quinone = orotate + a quinol. It functions in the pathway pyrimidine metabolism; UMP biosynthesis via de novo pathway; orotate from (S)-dihydroorotate (quinone route): step 1/1. In terms of biological role, catalyzes the conversion of dihydroorotate to orotate with quinone as electron acceptor. This chain is Dihydroorotate dehydrogenase (quinone), found in Shewanella baltica (strain OS223).